Here is a 193-residue protein sequence, read N- to C-terminus: Peptidyl-tRNA hydrolase (193 aa).

Tyr16 is a binding site for tRNA. The active-site Proton acceptor is the His21. Residues Phe67, Asn69, and Asn115 each contribute to the tRNA site.

This sequence belongs to the PTH family. As to quaternary structure, monomer.

Its subcellular location is the cytoplasm. The catalysed reaction is an N-acyl-L-alpha-aminoacyl-tRNA + H2O = an N-acyl-L-amino acid + a tRNA + H(+). Functionally, hydrolyzes ribosome-free peptidyl-tRNAs (with 1 or more amino acids incorporated), which drop off the ribosome during protein synthesis, or as a result of ribosome stalling. Its function is as follows. Catalyzes the release of premature peptidyl moieties from peptidyl-tRNA molecules trapped in stalled 50S ribosomal subunits, and thus maintains levels of free tRNAs and 50S ribosomes. The polypeptide is Peptidyl-tRNA hydrolase (Vesicomyosocius okutanii subsp. Calyptogena okutanii (strain HA)).